A 164-amino-acid chain; its full sequence is UPF0178 protein RPD_2254 (164 aa).

This sequence belongs to the UPF0178 family.

This is UPF0178 protein RPD_2254 from Rhodopseudomonas palustris (strain BisB5).